The following is a 326-amino-acid chain: Aspartate carbamoyltransferase catalytic subunit (326 aa).

Positions 76 and 77 each coordinate carbamoyl phosphate. Lysine 104 is an L-aspartate binding site. Positions 126, 156, and 159 each coordinate carbamoyl phosphate. Arginine 189 and arginine 244 together coordinate L-aspartate. Carbamoyl phosphate contacts are provided by glycine 285 and proline 286.

Belongs to the aspartate/ornithine carbamoyltransferase superfamily. ATCase family. As to quaternary structure, heterododecamer (2C3:3R2) of six catalytic PyrB chains organized as two trimers (C3), and six regulatory PyrI chains organized as three dimers (R2).

The catalysed reaction is carbamoyl phosphate + L-aspartate = N-carbamoyl-L-aspartate + phosphate + H(+). It participates in pyrimidine metabolism; UMP biosynthesis via de novo pathway; (S)-dihydroorotate from bicarbonate: step 2/3. Catalyzes the condensation of carbamoyl phosphate and aspartate to form carbamoyl aspartate and inorganic phosphate, the committed step in the de novo pyrimidine nucleotide biosynthesis pathway. The protein is Aspartate carbamoyltransferase catalytic subunit of Polynucleobacter asymbioticus (strain DSM 18221 / CIP 109841 / QLW-P1DMWA-1) (Polynucleobacter necessarius subsp. asymbioticus).